We begin with the raw amino-acid sequence, 500 residues long: MSPGLLLLGSAVLLAFGLCCTFVHRARSRYEHIPGPPRPSFLLGHLPYFWKKDEDCGRVLQDVFLDWAKKYGPVVRVNVFYKTSVIVTSPESVKKFLMSTKYNKDSKMYRALQTVFGERLFGQGLVSECDYGRWYKQRKVMDLAFSRSSLVSLMETFNEKAEQLVEILEAKADGQTPVSMQDMLTCATIDILAKAAFGMETSMLLGAQKPLSQAVKVMLEGISASRNTLAKFMPGKRKQLREIRESIRLLRQVGKDWVQRRREALKRGEDMPADILTQILKAEEGAQDDEVLLDNFVTFFIAGHETSANHLAFTVMELSRQPEIVARLQAEVDEVVGSKRHLDYEDLGRLQYLSQVLKESLRLYPPAWGTFRLLEEETLIDGVRVPGNTPLLFSTYVMGRMDTYFEDPLTFNPDRFGPGAPKPRFTYFPFSLGHRSCIGQQFAQMEVKVVMAKLLQRIEFRLVPGQRFGLQEQATLKPLDPVLCTLRPRGWQPAPPPPPC.

A helical membrane pass occupies residues 3–23 (PGLLLLGSAVLLAFGLCCTFV). Cys437 contacts heme.

It belongs to the cytochrome P450 family. The cofactor is heme. In terms of tissue distribution, expressed in high level in the pyramidal cells of the hippocampus, Purkinje cells of the cerebellum, and neuronal cell bodies in layers II/III, V, and VI of the cortex. Expressed in hippocampal and cerebellar interneurons, in retinal ganglion cells, and in a subset of retinal cells localized to the inner nuclear layer (at protein level).

The protein localises to the endoplasmic reticulum membrane. The protein resides in the microsome membrane. It localises to the postsynapse. Its subcellular location is the presynapse. It is found in the cell projection. The protein localises to the dendrite. It catalyses the reaction cholesterol + reduced [NADPH--hemoprotein reductase] + O2 = (24S)-hydroxycholesterol + oxidized [NADPH--hemoprotein reductase] + H2O + H(+). The catalysed reaction is cholestanol + reduced [NADPH--hemoprotein reductase] + O2 = (24S)-hydroxycholestanol + oxidized [NADPH--hemoprotein reductase] + H2O + H(+). It carries out the reaction 7-dehydrocholesterol + reduced [NADPH--hemoprotein reductase] + O2 = cholesta-5,7-dien-3beta,24S-diol + oxidized [NADPH--hemoprotein reductase] + H2O + H(+). The enzyme catalyses 7-dehydrocholesterol + reduced [NADPH--hemoprotein reductase] + O2 = cholesta-5,7-dien-3beta,25-diol + oxidized [NADPH--hemoprotein reductase] + H2O + H(+). It catalyses the reaction desmosterol + reduced [NADPH--hemoprotein reductase] + O2 = (24Z),26-hydroxydesmosterol + oxidized [NADPH--hemoprotein reductase] + H2O + H(+). The catalysed reaction is desmosterol + reduced [NADPH--hemoprotein reductase] + O2 = (24S)-25-epoxycholesterol + oxidized [NADPH--hemoprotein reductase] + H2O + H(+). It carries out the reaction 4beta-hydroxycholesterol + reduced [NADPH--hemoprotein reductase] + O2 = 4beta,24S-dihydroxycholesterol + oxidized [NADPH--hemoprotein reductase] + H2O + H(+). The enzyme catalyses (24S)-hydroxycholesterol + reduced [NADPH--hemoprotein reductase] + O2 = (24S,25R)-24,26-dihydroxycholesterol + oxidized [NADPH--hemoprotein reductase] + H2O + H(+). It catalyses the reaction (24S)-hydroxycholesterol + reduced [NADPH--hemoprotein reductase] + O2 = 24S,25-dihydroxycholesterol + oxidized [NADPH--hemoprotein reductase] + H2O + H(+). The catalysed reaction is 7alpha-hydroxycholesterol + reduced [NADPH--hemoprotein reductase] + O2 = (24S)-7alpha-dihydroxycholesterol + oxidized [NADPH--hemoprotein reductase] + H2O + H(+). It carries out the reaction progesterone + reduced [NADPH--hemoprotein reductase] + O2 = 17alpha-hydroxyprogesterone + oxidized [NADPH--hemoprotein reductase] + H2O + H(+). The enzyme catalyses testosterone + reduced [NADPH--hemoprotein reductase] + O2 = 16beta,17beta-dihydroxyandrost-4-en-3-one + oxidized [NADPH--hemoprotein reductase] + H2O + H(+). It catalyses the reaction testosterone + reduced [NADPH--hemoprotein reductase] + O2 = 2-hydroxytestosterone + oxidized [NADPH--hemoprotein reductase] + H2O + H(+). The catalysed reaction is testosterone + reduced [NADPH--hemoprotein reductase] + O2 = 6beta,17beta-dihydroxyandrost-4-en-3-one + oxidized [NADPH--hemoprotein reductase] + H2O + H(+). It functions in the pathway steroid metabolism; cholesterol degradation. The protein operates within lipid metabolism; C21-steroid hormone metabolism. Functionally, P450 monooxygenase that plays a major role in cholesterol homeostasis in the brain. Primarily catalyzes the hydroxylation (with S stereochemistry) at C-24 of cholesterol side chain, triggering cholesterol diffusion out of neurons and its further degradation. By promoting constant cholesterol elimination in neurons, may activate the mevalonate pathway and coordinate the synthesis of new cholesterol and nonsterol isoprenoids involved in synaptic activity and learning. Further hydroxylates cholesterol derivatives and hormone steroids on both the ring and side chain of these molecules, converting them into active oxysterols involved in lipid signaling and biosynthesis. Acts as an epoxidase converting cholesta-5,24-dien-3beta-ol/desmosterol into (24S),25-epoxycholesterol, an abundant lipid ligand of nuclear NR1H2 and NR1H3 receptors shown to promote neurogenesis in developing brain. May also catalyze the oxidative metabolism of xenobiotics, such as clotrimazole. In Mus musculus (Mouse), this protein is Cholesterol 24-hydroxylase.